We begin with the raw amino-acid sequence, 165 residues long: uncharacterized protein (165 aa).

A helical transmembrane segment spans residues Ile-20–Phe-40. Asn-51 carries an N-linked (GlcNAc...) asparagine; by host glycan. Residues Val-97–Met-117 traverse the membrane as a helical segment.

It localises to the membrane. This is an uncharacterized protein from Acanthamoeba polyphaga (Amoeba).